A 416-amino-acid polypeptide reads, in one-letter code: Gamma-glutamyl phosphate reductase (416 aa).

This sequence belongs to the gamma-glutamyl phosphate reductase family.

It is found in the cytoplasm. The enzyme catalyses L-glutamate 5-semialdehyde + phosphate + NADP(+) = L-glutamyl 5-phosphate + NADPH + H(+). The protein operates within amino-acid biosynthesis; L-proline biosynthesis; L-glutamate 5-semialdehyde from L-glutamate: step 2/2. Functionally, catalyzes the NADPH-dependent reduction of L-glutamate 5-phosphate into L-glutamate 5-semialdehyde and phosphate. The product spontaneously undergoes cyclization to form 1-pyrroline-5-carboxylate. The sequence is that of Gamma-glutamyl phosphate reductase from Streptococcus uberis (strain ATCC BAA-854 / 0140J).